The chain runs to 74 residues: Capsid protein VP2 (74 aa).

The protein localises to the virion. In terms of biological role, this extremely basic protein may tightly bind to SSV1 DNA. Essential for virus function. This is Capsid protein VP2 (VP2) from Saccharolobus solfataricus (Sulfolobus solfataricus).